The sequence spans 513 residues: GMP synthase [glutamine-hydrolyzing] (513 aa).

The region spanning 5–195 (LVLVIDFGGQ…VYNICGCTGD (191 aa)) is the Glutamine amidotransferase type-1 domain. Residue C82 is the Nucleophile of the active site. Residues H169 and E171 contribute to the active site. The GMPS ATP-PPase domain maps to 196–388 (WKMDSFVEKT…LGIPEKLVFR (193 aa)). Residue 223–229 (SGGVDSS) participates in ATP binding.

In terms of assembly, homodimer.

The enzyme catalyses XMP + L-glutamine + ATP + H2O = GMP + L-glutamate + AMP + diphosphate + 2 H(+). It functions in the pathway purine metabolism; GMP biosynthesis; GMP from XMP (L-Gln route): step 1/1. In terms of biological role, catalyzes the synthesis of GMP from XMP. This is GMP synthase [glutamine-hydrolyzing] from Clostridium botulinum (strain Alaska E43 / Type E3).